The chain runs to 774 residues: Chondroitin sulfate synthase 2 (774 aa).

Topologically, residues 1-15 (MRASLLLSVLRPAGP) are cytoplasmic. A helical; Signal-anchor for type II membrane protein transmembrane segment spans residues 16–34 (VAVGISLGFTLSLLSVTWV). Topologically, residues 35 to 774 (EEPCGPGPPQ…LFEQEQGNST (740 aa)) are lumenal. The interval 37–103 (PCGPGPPQPG…AQPGQATKKA (67 aa)) is disordered. The span at 54–67 (GNTNAARRPNSVQP) shows a compositional bias: polar residues. N-linked (GlcNAc...) asparagine glycosylation is found at Asn138 and Asn361. Asp616 is an a divalent metal cation binding site.

Belongs to the chondroitin N-acetylgalactosaminyltransferase family. Interacts with PRKN. Mn(2+) is required as a cofactor. Requires Co(2+) as cofactor. Isoform 1, isoform 2 and isoform 3 are expressed in brain (at protein level).

It localises to the golgi apparatus. The protein resides in the golgi stack membrane. The protein localises to the cytoplasm. Its subcellular location is the cytosol. It is found in the mitochondrion. It localises to the mitochondrion matrix. It catalyses the reaction 3-O-(beta-D-GlcA-(1-&gt;3)-beta-D-GalNAc-(1-&gt;4)-beta-D-GlcA-(1-&gt;3)-beta-D-Gal-(1-&gt;3)-beta-D-Gal-(1-&gt;4)-beta-D-Xyl)-L-seryl-[protein] + UDP-N-acetyl-alpha-D-galactosamine = 3-O-(beta-D-GalNAc-(1-&gt;4)-beta-D-GlcA-(1-&gt;3)-beta-D-GalNAc-(1-&gt;4)-beta-D-GlcA-(1-&gt;3)-beta-D-Gal-(1-&gt;3)-beta-D-Gal-(1-&gt;4)-beta-D-Xyl)-L-seryl-[protein] + UDP + H(+). The enzyme catalyses 3-O-{beta-D-GlcA-(1-&gt;3)-[beta-D-GalNAc-(1-&gt;4)-beta-D-GlcA-(1-&gt;3)](n)-beta-D-GalNAc-(1-&gt;4)-beta-D-GlcA-(1-&gt;3)-beta-D-Gal-(1-&gt;3)-beta-D-Gal-(1-&gt;4)-beta-D-Xyl}-L-seryl-[protein] + UDP-N-acetyl-alpha-D-galactosamine = 3-O-{[beta-D-GalNAc-(1-&gt;4)-beta-D-GlcA-(1-&gt;3)](n+1)-beta-D-GalNAc-(1-&gt;4)-beta-D-GlcA-(1-&gt;3)-beta-D-Gal-(1-&gt;3)-beta-D-Gal-(1-&gt;4)-beta-D-Xyl}-L-seryl-[protein] + UDP + H(+). It carries out the reaction 3-O-(beta-D-GalNAc-(1-&gt;4)-beta-D-GlcA-(1-&gt;3)-beta-D-Gal-(1-&gt;3)-beta-D-Gal-(1-&gt;4)-beta-D-Xyl)-L-seryl-[protein] + UDP-alpha-D-glucuronate = 3-O-(beta-D-GlcA-(1-&gt;3)-beta-D-GalNAc-(1-&gt;4)-beta-D-GlcA-(1-&gt;3)-beta-D-Gal-(1-&gt;3)-beta-D-Gal-(1-&gt;4)-beta-D-Xyl)-L-seryl-[protein] + UDP + H(+). The catalysed reaction is 3-O-{[beta-D-GalNAc-(1-&gt;4)-beta-D-GlcA-(1-&gt;3)](n)-beta-D-GalNAc-(1-&gt;4)-beta-D-GlcA-(1-&gt;3)-beta-D-Gal-(1-&gt;3)-beta-D-Gal-(1-&gt;4)-beta-D-Xyl}-L-seryl-[protein] + UDP-alpha-D-glucuronate = 3-O-{beta-D-GlcA-(1-&gt;3)-[beta-D-GalNAc-(1-&gt;4)-beta-D-GlcA-(1-&gt;3)](n)-beta-D-GalNAc-(1-&gt;4)-beta-D-GlcA-(1-&gt;3)-beta-D-Gal-(1-&gt;3)-beta-D-Gal-(1-&gt;4)-beta-D-Xyl}-L-seryl-[protein] + UDP + H(+). Functionally, has both beta-1,3-glucuronic acid and beta-1,4-N-acetylgalactosamine transferase activity. Transfers glucuronic acid (GlcUA) from UDP-GlcUA and N-acetylgalactosamine (GalNAc) from UDP-GalNAc to the non-reducing end of the elongating chondroitin polymer. Seems to act as a specific activating factor for CHSY1 in chondroitin polymerization. May facilitate PRKN transport into the mitochondria. In collaboration with PRKN, may enhance cell viability and protect cells from oxidative stress. This Mus musculus (Mouse) protein is Chondroitin sulfate synthase 2.